The sequence spans 193 residues: Ion-translocating oxidoreductase complex subunit A (193 aa).

6 helical membrane-spanning segments follow: residues 4–24 (FLLVLLSTALVNNVVLVKFLG), 39–59 (IGMGLATTFVITVASAACWLV), 71–91 (FLRILSMILVIAAIVQFIETV), 102–122 (ALGIYLPLITTNCAVLGLPLM), 134–154 (TLSGFGASVGFTLVLVIFAGM), and 171–191 (PIAFVSAGLLGLAFMGFAGLV).

It belongs to the NqrDE/RnfAE family. As to quaternary structure, the complex is composed of six subunits: RnfA, RnfB, RnfC, RnfD, RnfE and RnfG.

Its subcellular location is the cellular chromatophore membrane. Functionally, part of a membrane-bound complex that couples electron transfer with translocation of ions across the membrane. Required for nitrogen fixation. Involved in electron transfer to nitrogenase. This Rhodobacter capsulatus (Rhodopseudomonas capsulata) protein is Ion-translocating oxidoreductase complex subunit A.